The chain runs to 271 residues: Cell division protein FtsQ (271 aa).

The disordered stretch occupies residues 1–37 (MAAGPTTAEKSGASGAKRSSKGSSDGPSRPGTRNRKF). Residues 1–43 (MAAGPTTAEKSGASGAKRSSKGSSDGPSRPGTRNRKFRMPGTR) are Cytoplasmic-facing. Residues 8–24 (AEKSGASGAKRSSKGSS) show a composition bias toward low complexity. A helical membrane pass occupies residues 44–64 (ALLITLGVLLLVAGGLWALYG). Over 65–271 (STWFRVERVK…APTAPASSGS (207 aa)) the chain is Extracellular. The region spanning 68–137 (FRVERVKTSG…HGIGLKVTER (70 aa)) is the POTRA domain.

It belongs to the FtsQ/DivIB family. FtsQ subfamily.

Its subcellular location is the cell membrane. Essential cell division protein. The polypeptide is Cell division protein FtsQ (Streptomyces venezuelae (strain ATCC 10712 / CBS 650.69 / DSM 40230 / JCM 4526 / NBRC 13096 / PD 04745)).